A 290-amino-acid polypeptide reads, in one-letter code: HTH-type transcriptional activator RhaR (290 aa).

Residues 179–277 (DLIMSALQQS…GMTPRDYRQR (99 aa)) form the HTH araC/xylS-type domain. 2 DNA-binding regions (H-T-H motif) span residues 196 to 217 (ADFC…RQQT) and 244 to 267 (ISDI…TREA).

Binds DNA as a dimer.

The protein localises to the cytoplasm. In terms of biological role, activates expression of the rhaSR operon in response to L-rhamnose. This is HTH-type transcriptional activator RhaR from Yersinia pestis bv. Antiqua (strain Antiqua).